Reading from the N-terminus, the 789-residue chain is UPF0313 protein VC_1711 (789 aa).

The Radical SAM core domain occupies 363–642 (AYDMIKTSVN…KALLRYHDPA (280 aa)). [4Fe-4S] cluster is bound by residues C377, C381, and C384. The interval 669-789 (PEKDSDLVTP…NTQRQPQRAR (121 aa)) is disordered. Basic residues predominate over residues 683–698 (KSGRHGANRFATKHTH). Polar residues-rich tracts occupy residues 716–726 (RPNSGNKSNQG), 733–763 (PTGS…QRGS), and 778–789 (RGNTQRQPQRAR).

Belongs to the UPF0313 family. It depends on [4Fe-4S] cluster as a cofactor.

The chain is UPF0313 protein VC_1711 from Vibrio cholerae serotype O1 (strain ATCC 39315 / El Tor Inaba N16961).